We begin with the raw amino-acid sequence, 250 residues long: Imidazole glycerol phosphate synthase subunit HisF (250 aa).

Residues D11 and D130 contribute to the active site.

It belongs to the HisA/HisF family. As to quaternary structure, heterodimer of HisH and HisF.

The protein resides in the cytoplasm. The catalysed reaction is 5-[(5-phospho-1-deoxy-D-ribulos-1-ylimino)methylamino]-1-(5-phospho-beta-D-ribosyl)imidazole-4-carboxamide + L-glutamine = D-erythro-1-(imidazol-4-yl)glycerol 3-phosphate + 5-amino-1-(5-phospho-beta-D-ribosyl)imidazole-4-carboxamide + L-glutamate + H(+). Its pathway is amino-acid biosynthesis; L-histidine biosynthesis; L-histidine from 5-phospho-alpha-D-ribose 1-diphosphate: step 5/9. In terms of biological role, IGPS catalyzes the conversion of PRFAR and glutamine to IGP, AICAR and glutamate. The HisF subunit catalyzes the cyclization activity that produces IGP and AICAR from PRFAR using the ammonia provided by the HisH subunit. The protein is Imidazole glycerol phosphate synthase subunit HisF of Bacteroides fragilis (strain YCH46).